Here is a 153-residue protein sequence, read N- to C-terminus: FAD synthase (153 aa).

ATP-binding positions include 9-10, 14-17, and aspartate 92; these read TF and HPGH.

Belongs to the archaeal FAD synthase family. Homodimer. It depends on a divalent metal cation as a cofactor.

The catalysed reaction is FMN + ATP + H(+) = FAD + diphosphate. Its pathway is cofactor biosynthesis; FAD biosynthesis; FAD from FMN: step 1/1. In terms of biological role, catalyzes the transfer of the AMP portion of ATP to flavin mononucleotide (FMN) to produce flavin adenine dinucleotide (FAD) coenzyme. The protein is FAD synthase of Halorubrum lacusprofundi (strain ATCC 49239 / DSM 5036 / JCM 8891 / ACAM 34).